We begin with the raw amino-acid sequence, 237 residues long: Lipid A 1-diphosphate synthase (237 aa).

The Cytoplasmic portion of the chain corresponds to 1 to 5 (MIKNL). A helical transmembrane segment spans residues 6-26 (PQIVLLNIVGLALFLSWYIPV). Residues 27 to 62 (NHGFWLPIDADIFYFFNQKLVESKAFLWLVALTNNR) lie on the Periplasmic side of the membrane. The chain crosses the membrane as a helical span at residues 63–83 (AFDGCSLLAMGMLMLSFWLKE). Over 84–90 (NAPGRRR) the chain is Cytoplasmic. Residues 91–111 (IVIIGLVMLLTAVVLNQLGQA) traverse the membrane as a helical segment. The Periplasmic portion of the chain corresponds to 112–145 (LIPVKRASPTLTFTDINRVSELLSVPTKDASRDS). Residue Lys167 is a topological domain, cytoplasmic. The helical transmembrane segment at 168–188 (VAGLIALIIFVVFAFPRVMIG) threads the bilayer. The Periplasmic portion of the chain corresponds to 189–194 (AHWFTD). The helical transmembrane segment at 195–215 (IIVGSMTVILIGLPWVLLTPL) threads the bilayer. The Cytoplasmic segment spans residues 216–237 (SDRLITFFDKSLPGKNKHFQNK).

This sequence belongs to the LpxT phosphotransferase family.

Its subcellular location is the cell inner membrane. The catalysed reaction is di-trans,octa-cis-undecaprenyl diphosphate + alpha-Kdo-(2-&gt;4)-alpha-Kdo-(2-&gt;6)-lipid A (E. coli) = (Kdo)2-lipid A 1-diphosphate + di-trans,octa-cis-undecaprenyl phosphate. It functions in the pathway bacterial outer membrane biogenesis; lipopolysaccharide biosynthesis. Inhibited by BasR. This regulation does not occur at the level of transcription, but rather following the assembly of LpxT into the inner membrane. Its function is as follows. Involved in the modification of the lipid A domain of lipopolysaccharides (LPS). Transfers a phosphate group from undecaprenyl pyrophosphate (C55-PP) to lipid A to form lipid A 1-diphosphate. Contributes to the recycling of undecaprenyl phosphate (C55-P). In vitro, has low undecaprenyl-diphosphate phosphatase activity. This is Lipid A 1-diphosphate synthase from Escherichia coli (strain K12).